A 481-amino-acid polypeptide reads, in one-letter code: Coniferyl aldehyde dehydrogenase (481 aa).

Catalysis depends on residues glutamate 221 and cysteine 255.

The protein belongs to the aldehyde dehydrogenase family. In terms of assembly, homodimer.

It catalyses the reaction (E)-coniferaldehyde + NADP(+) + H2O = (E)-ferulate + NADPH + 2 H(+). It carries out the reaction (E)-coniferaldehyde + NAD(+) + H2O = (E)-ferulate + NADH + 2 H(+). Functionally, catalyzes the NAD(+)-dependent oxidation of coniferyl aldehyde to ferulic acid and which is induced during growth with eugenol as the carbon source. This chain is Coniferyl aldehyde dehydrogenase (calB), found in Pseudomonas sp. (strain HR199 / DSM 7063).